A 486-amino-acid chain; its full sequence is Shugoshin-1 (486 aa).

Residues 71-154 adopt a coiled-coil conformation; the sequence is IEVSRVELQK…QNRAKILEKK (84 aa). Disordered regions lie at residues 137-163, 187-209, 222-251, 323-346, 382-403, and 418-467; these read MSKT…CAPT, YTSC…RKSE, HSCR…ARLN, AGSS…PRKS, PIQH…DPGP, and TVAP…SRRA. The segment covering 331–346 has biased composition (basic and acidic residues); the sequence is EAHKFDIEDPEPPRKS. The segment covering 387–396 has biased composition (basic residues); that stretch reads QKRKLSRRKS. Polar residues predominate over residues 423-433; it reads APSSSNALIEQ.

The protein belongs to the shugoshin family. Highly expressed in roots. Expressed in panicles. Expressed at low levels in leaves.

It is found in the nucleus. It localises to the nucleolus. The protein localises to the chromosome. The protein resides in the centromere. Its function is as follows. Plays a central role in chromosome cohesion during meiosis I by preventing premature dissociation of cohesin complex from centromeres after prophase, when most of cohesin complex dissociates from chromosomes arms. Required for the timely assembly and maintenance of synaptonemal complex (SC) during early prophase I. Required for maintenance of centromeric cohesion before prophase II and correct segregation of chromatids during meiosis II. Has apparently no function in mitosis. This Oryza sativa subsp. japonica (Rice) protein is Shugoshin-1.